Here is a 163-residue protein sequence, read N- to C-terminus: Staphylokinase (163 aa).

The first 27 residues, 1-27, serve as a signal peptide directing secretion; that stretch reads MLKRSLLFLTVLLLLFSFSSITNEVSA.

It belongs to the staphylokinase family.

It is found in the secreted. Potent plasminogen activator that converts plasminogen into plasmin. It forms a 1:1 complex with plasmin, which in turn activates other plasminogen molecules. The polypeptide is Staphylokinase (sak) (Staphylococcus phage phi13 (Bacteriophage phi-13)).